The following is a 743-amino-acid chain: tRNA(Met) cytidine acetyltransferase TmcA (743 aa).

ATP contacts are provided by residues Gln216, 241 to 250 (GRGKSASIGL), and Arg390. One can recognise an N-acetyltransferase domain in the interval 420–604 (LKIEDVSQEE…YSVIVIRALS (185 aa)). Residues 531–533 (IAV) and 538–544 (QGKGIGS) contribute to the acetyl-CoA site.

The protein belongs to the RNA cytidine acetyltransferase family. TmcA subfamily.

Its subcellular location is the cytoplasm. It carries out the reaction cytidine(34) in elongator tRNA(Met) + acetyl-CoA + ATP + H2O = N(4)-acetylcytidine(34) in elongator tRNA(Met) + ADP + phosphate + CoA + H(+). Its function is as follows. Catalyzes the formation of N(4)-acetylcytidine (ac(4)C) at the wobble position of tRNA(Met), by using acetyl-CoA as an acetyl donor and ATP (or GTP). This is tRNA(Met) cytidine acetyltransferase TmcA from Saccharolobus islandicus (strain Y.G.57.14 / Yellowstone #1) (Sulfolobus islandicus).